The chain runs to 250 residues: Probable transcriptional regulatory protein SAV_6832 (250 aa).

The protein belongs to the TACO1 family.

It is found in the cytoplasm. This is Probable transcriptional regulatory protein SAV_6832 from Streptomyces avermitilis (strain ATCC 31267 / DSM 46492 / JCM 5070 / NBRC 14893 / NCIMB 12804 / NRRL 8165 / MA-4680).